We begin with the raw amino-acid sequence, 189 residues long: UPF0494 membrane protein C977.06 (189 aa).

Helical transmembrane passes span 78–98 (WPLL…NFEV), 120–140 (IWGP…GLIY), and 148–168 (AIPL…VAMV).

This sequence belongs to the UPF0494 family.

The protein resides in the membrane. The chain is UPF0494 membrane protein C977.06 from Schizosaccharomyces pombe (strain 972 / ATCC 24843) (Fission yeast).